The following is a 91-amino-acid chain: Small ribosomal subunit protein uS15c (91 aa).

Belongs to the universal ribosomal protein uS15 family. Part of the 30S ribosomal subunit.

The protein resides in the plastid. It localises to the chloroplast. The sequence is that of Small ribosomal subunit protein uS15c (rps15) from Cicer arietinum (Chickpea).